The chain runs to 874 residues: Probable leucine--tRNA ligase, cytoplasmic (874 aa).

Positions 36-46 (PYMNGRLHLGH) match the 'HIGH' region motif. A 'KMSKS' region motif is present at residues 544 to 548 (KMSKS). K547 is an ATP binding site.

Belongs to the class-I aminoacyl-tRNA synthetase family.

It is found in the cytoplasm. The catalysed reaction is tRNA(Leu) + L-leucine + ATP = L-leucyl-tRNA(Leu) + AMP + diphosphate. This chain is Probable leucine--tRNA ligase, cytoplasmic, found in Encephalitozoon cuniculi (strain GB-M1) (Microsporidian parasite).